An 87-amino-acid chain; its full sequence is Phosphocarrier protein HPr (87 aa).

Residues 1–87 (MEKIFKVTSD…ETMKNEGLGE (87 aa)) enclose the HPr domain. Histidine 14 acts as the Pros-phosphohistidine intermediate; alternate in catalysis. Histidine 14 bears the Tele-phosphohistidine; alternate mark. Position 45 is a phosphoserine; by HPrK/P (serine 45).

This sequence belongs to the HPr family. Post-translationally, the form phosphorylated at the tele nitrogen (N(epsilon)2), instead of the expected pros nitrogen (N(delta)1), of His-14 is not able to transfer its phosphoryl group to the B.subtilis EIIA-Glc domain. This form may be inactive in PTS-catalyzed sugar transport or target an as yet unknown acceptor molecule in an alternative metabolic process.

It localises to the cytoplasm. Its activity is regulated as follows. Phosphorylation on Ser-45 inhibits the phosphoryl transfer from enzyme I to HPr. Its function is as follows. General (non sugar-specific) component of the phosphoenolpyruvate-dependent sugar phosphotransferase system (sugar PTS). This major carbohydrate active-transport system catalyzes the phosphorylation of incoming sugar substrates concomitantly with their translocation across the cell membrane. The phosphoryl group from phosphoenolpyruvate (PEP) is transferred to the phosphoryl carrier protein HPr by enzyme I. Phospho-HPr then transfers it to the PTS EIIA domain. P-Ser-HPr interacts with the catabolite control protein A (CcpA), forming a complex that binds to DNA at the catabolite response elements cre, operator sites preceding a large number of catabolite-regulated genes. Thus, P-Ser-HPr is a corepressor in carbon catabolite repression (CCR), a mechanism that allows bacteria to coordinate and optimize the utilization of available carbon sources. P-Ser-HPr mediates glucose catabolite repression of cry4A toxin expression. The polypeptide is Phosphocarrier protein HPr (ptsH) (Bacillus thuringiensis subsp. israelensis).